The primary structure comprises 1166 residues: Serine/threonine-protein kinase BRI1-like 1 (1166 aa).

Positions 1–21 (MKQRWLLVLILCFFTTSLVMG) are cleaved as a signal peptide. At 22 to 776 (IHGKHLINDD…IHAKKQTVAT (755 aa)) the chain is on the extracellular side. The N-linked (GlcNAc...) asparagine glycan is linked to asparagine 33. Positions 66 to 73 (CSWRGVSC) match the Cys pair 1 motif. LRR repeat units follow at residues 78–99 (RIVG…VNLT), 103–124 (NLQN…SGSD), 126–147 (YLQV…DYVF), 152–173 (NLVS…APSS), 176–197 (SLTT…SFIS), 202–224 (SLKY…SFGI), 227–248 (NLTF…ITLP), 252–274 (FLET…EYWG), 278–300 (NLKQ…LSLL), 303–325 (TLVI…FTAC), 327–349 (WLQN…VVSK), 352–375 (GITY…TNCS), 376–397 (NLRV…GFCS), 403–424 (VLEK…ELGK), 427–449 (SLKT…IWML), 451–473 (NLSD…VCVK), 476–498 (NLET…ISRC), 500–522 (NMIW…IGNL), 524–547 (KLAI…GNCK), and 548–570 (SLIW…LASQ). Asparagine 97 carries an N-linked (GlcNAc...) asparagine glycan. Residue asparagine 157 is glycosylated (N-linked (GlcNAc...) asparagine). Residues asparagine 212, asparagine 227, asparagine 237, and asparagine 257 are each glycosylated (N-linked (GlcNAc...) asparagine). Asparagine 362 and asparagine 373 each carry an N-linked (GlcNAc...) asparagine glycan. Residues asparagine 451 and asparagine 461 are each glycosylated (N-linked (GlcNAc...) asparagine). Residues asparagine 521, asparagine 532, asparagine 558, and asparagine 638 are each glycosylated (N-linked (GlcNAc...) asparagine). LRR repeat units lie at residues 664-686 (YLQV…FGGL), 688-710 (AIGV…LGSL), and 712-734 (FLSD…GQLT). Asparagine 722 and asparagine 743 each carry an N-linked (GlcNAc...) asparagine glycan. Positions 748-755 (CGVPLRPC) match the Cys pair 2 motif. The chain crosses the membrane as a helical span at residues 777–797 (AVIAGIAFSFMCFVMLVMALY). Topologically, residues 798–1166 (RVRKVQKKEQ…LVEESRDKEP (369 aa)) are cytoplasmic. Residues threonine 848 and threonine 856 each carry the phosphothreonine modification. Residues 859–1147 (FSAETMVGSG…KADTEEDESL (289 aa)) enclose the Protein kinase domain. ATP is bound by residues 865–873 (VGSGGFGEV) and lysine 887. Tyrosine 932 carries the phosphotyrosine modification. Aspartate 987 functions as the Proton acceptor in the catalytic mechanism. Serine 1022 is modified (phosphoserine). A Phosphotyrosine modification is found at tyrosine 1030. Phosphothreonine is present on threonine 1141. The interval 1142–1166 (EEDESLDEFSLKETPLVEESRDKEP) is disordered.

Belongs to the protein kinase superfamily. Ser/Thr protein kinase family. Predominantly expressed in vascular tissues. From 7 day old seedlings, it is expressed in the columella cells of the root tip, in the vascular initials in the meristematic region of the root and in vascular tissues. After germination, it is expressed in the stele cell and in the early differentiation zone of the root, where the expression continues from the root to the hypocotyls and cotyledons following the midvein. In mature plants, it is expressed in the vasculature of the leaf, predominantly in the midvein, and in the vascular bundles of inflorescence stems. Localizes to procambial cells of the vascular bundles located between the differentiating xylem and the phloem.

Its subcellular location is the cell membrane. It carries out the reaction L-seryl-[protein] + ATP = O-phospho-L-seryl-[protein] + ADP + H(+). The catalysed reaction is L-threonyl-[protein] + ATP = O-phospho-L-threonyl-[protein] + ADP + H(+). Its function is as follows. Receptor with a serine/threonine-protein kinase activity. Regulates, in response to brassinosteroid binding, a signaling cascade involved in plant development. Binds brassinolide. May be involved in cell growth and vascular differentiation. In Arabidopsis thaliana (Mouse-ear cress), this protein is Serine/threonine-protein kinase BRI1-like 1 (BRL1).